The primary structure comprises 95 residues: Co-chaperonin GroES (95 aa).

The protein belongs to the GroES chaperonin family. Heptamer of 7 subunits arranged in a ring. Interacts with the chaperonin GroEL.

The protein resides in the cytoplasm. Its function is as follows. Together with the chaperonin GroEL, plays an essential role in assisting protein folding. The GroEL-GroES system forms a nano-cage that allows encapsulation of the non-native substrate proteins and provides a physical environment optimized to promote and accelerate protein folding. GroES binds to the apical surface of the GroEL ring, thereby capping the opening of the GroEL channel. The chain is Co-chaperonin GroES from Streptococcus uberis (strain ATCC BAA-854 / 0140J).